The sequence spans 359 residues: Probable C-C chemokine receptor type 3 (359 aa).

The Extracellular portion of the chain corresponds to 1–38 (MAFNTDEIKTVVESFETTPYEYEWAPPCEKVRIKELGS). A helical membrane pass occupies residues 39–64 (WLLPPLYSLVFIIGLLGNMMVVLILI). At 65-68 (KYRK) the chain is on the cytoplasmic side. A helical membrane pass occupies residues 69–95 (LQIMTNIYLFNLAISDLLFLFTVPFWI). The Extracellular portion of the chain corresponds to 96 to 111 (HYVLWNEWGFGHYMCK). A disulfide bridge links cysteine 110 with cysteine 187. A helical membrane pass occupies residues 112–133 (MLSGFYYLALYSEIFFIILLTI). Over 134–150 (DRYLAIVHAVFALRART) the chain is Cytoplasmic. A helical transmembrane segment spans residues 151–175 (VTFATITSIITWGLAGLAALPEFIF). Residues 176–201 (HESQDSFGEFSCSPRYPEGEEDSWKR) are Extracellular-facing. A helical transmembrane segment spans residues 202–227 (FHALRMNIFGLALPLLIMVICYSGII). Over 228 to 243 (KTLLRCPNKKKHKAIR) the chain is Cytoplasmic. A helical membrane pass occupies residues 244–268 (LIFVVMIVFFIFWTPYNLVLLFSAF). Topologically, residues 269-285 (HSTFLETSCQQSKHLDL) are extracellular. The chain crosses the membrane as a helical span at residues 286–309 (AMQVTEVIAYTHCCINPVIYAFVG). Residues 310–359 (ERFRKHLRLFFHRNVAVYLGKYIPFLPGEKMERTSSVSPSTGEQEISVVF) are Cytoplasmic-facing.

It belongs to the G-protein coupled receptor 1 family. In terms of tissue distribution, detected in skeletal muscle and in trace amounts in leukocytes.

It localises to the cell membrane. Receptor for C-C type chemokine. Binds and responds to a variety of chemokines, including CCL11, CCL26, CCL7, CCL13, RANTES(CCL5) and CCL15. Subsequently transduces a signal by increasing the intracellular calcium ions level. In addition acts as a possible functional receptor for NARS1. This is Probable C-C chemokine receptor type 3 (Ccr3) from Mus musculus (Mouse).